The primary structure comprises 401 residues: Phosphoglycerate kinase (401 aa).

Residues 20 to 22 (DFN), Arg-35, 58 to 61 (HLGR), Arg-117, and Arg-154 each bind substrate. ATP contacts are provided by residues Lys-204, Gly-298, Glu-329, and 358-361 (GGDS).

It belongs to the phosphoglycerate kinase family. Monomer.

The protein localises to the cytoplasm. The enzyme catalyses (2R)-3-phosphoglycerate + ATP = (2R)-3-phospho-glyceroyl phosphate + ADP. The protein operates within carbohydrate degradation; glycolysis; pyruvate from D-glyceraldehyde 3-phosphate: step 2/5. The protein is Phosphoglycerate kinase of Bifidobacterium longum subsp. infantis (strain ATCC 15697 / DSM 20088 / JCM 1222 / NCTC 11817 / S12).